The primary structure comprises 188 residues: Putative lipoprotein LprB (188 aa).

A signal peptide spans 1–27; the sequence is MRCDVRALALAARGLIELMIVIPMVAG. Residue Cys28 is the site of N-palmitoyl cysteine attachment. Cys28 is lipidated: S-diacylglycerol cysteine.

Its subcellular location is the cell membrane. The chain is Putative lipoprotein LprB (lprB) from Mycobacterium leprae (strain TN).